The primary structure comprises 393 residues: NAD(P)H-quinone oxidoreductase subunit H, chloroplastic (393 aa).

Belongs to the complex I 49 kDa subunit family. As to quaternary structure, NDH is composed of at least 16 different subunits, 5 of which are encoded in the nucleus.

It is found in the plastid. It localises to the chloroplast thylakoid membrane. It carries out the reaction a plastoquinone + NADH + (n+1) H(+)(in) = a plastoquinol + NAD(+) + n H(+)(out). The enzyme catalyses a plastoquinone + NADPH + (n+1) H(+)(in) = a plastoquinol + NADP(+) + n H(+)(out). Functionally, NDH shuttles electrons from NAD(P)H:plastoquinone, via FMN and iron-sulfur (Fe-S) centers, to quinones in the photosynthetic chain and possibly in a chloroplast respiratory chain. The immediate electron acceptor for the enzyme in this species is believed to be plastoquinone. Couples the redox reaction to proton translocation, and thus conserves the redox energy in a proton gradient. In Lactuca sativa (Garden lettuce), this protein is NAD(P)H-quinone oxidoreductase subunit H, chloroplastic.